The following is an 870-amino-acid chain: Eukaryotic translation initiation factor 3 subunit C (870 aa).

Residues 1 to 92 (MSRFFRGDSS…GVKVVKSAKN (92 aa)) form a disordered region. Residues 14–54 (SSDEEEDLYSDDEEVQEQPEEESEEDDSEEDDDDDDSDSSS) are compositionally biased toward acidic residues. The 175-residue stretch at 608 to 782 (FHMHINLELL…SSIIFRKGVE (175 aa)) folds into the PCI domain. Residues 807 to 870 (TLETRTQGTA…ALGAAVGSRA (64 aa)) are disordered. The span at 824–844 (GRGGRGGNRGGRGGNRGGRGG) shows a compositional bias: gly residues.

This sequence belongs to the eIF-3 subunit C family. As to quaternary structure, component of the eukaryotic translation initiation factor 3 (eIF-3) complex.

The protein resides in the cytoplasm. Its function is as follows. Component of the eukaryotic translation initiation factor 3 (eIF-3) complex, which is involved in protein synthesis of a specialized repertoire of mRNAs and, together with other initiation factors, stimulates binding of mRNA and methionyl-tRNAi to the 40S ribosome. The eIF-3 complex specifically targets and initiates translation of a subset of mRNAs involved in cell proliferation. The chain is Eukaryotic translation initiation factor 3 subunit C (nip1) from Sclerotinia sclerotiorum (strain ATCC 18683 / 1980 / Ss-1) (White mold).